Reading from the N-terminus, the 541-residue chain is MTVFNKFARTFKSHWLLYLCVIVFGITNLVASSGAHMVQRLLFFVLTILVVKRISSLPLRLLVAAPFVLLTAADMSISLYSWCTFGTTFNDGFAISVLQSDPDEVVKMLGMYIPYLCAFAFLSLLFLAVIIKYDVSLPTKKVTGILLLIVISGSLFSACQFAYKDAKNKKAFSPYILASRFATYTPFFNLNYFALAAKEHQRLLSIANTVPYFQLSVRDTGIDTYVLIVGESVRVDNMSLYGYTRSTTPQVEAQRKQIKLFNQAISGAPYTALSVPLSLTADSVLSHDIHNYPDNIINMANQAGFQTFWLSSQSAFRQNGTAVTSIAMRAMETVYVRGFDELLLPHLSQALQQNTQQKKLIVLHLNGSHEPACSAYPQSSAVFQPQDDQDACYDNSIHYTDSLLGQVFELLKDRRASVMYFADHGLERDPTKKNVYFHGGREASQQAYHVPMFIWYSPVLGDGVDRTTENNIFSTAYNNYLINAWMGVTKPEQPQTLEEVIAHYKGDSRVVDANHDVFDYVMLRKEFTEDKQGNPTPEGQG.

The Periplasmic segment spans residues 1–60; it reads MTVFNKFARTFKSHWLLYLCVIVFGITNLVASSGAHMVQRLLFFVLTILVVKRISSLPLR. Residues 61–81 form a helical membrane-spanning segment; the sequence is LLVAAPFVLLTAADMSISLYS. The Cytoplasmic segment spans residues 82-110; that stretch reads WCTFGTTFNDGFAISVLQSDPDEVVKMLG. A helical membrane pass occupies residues 111–131; that stretch reads MYIPYLCAFAFLSLLFLAVII. Topologically, residues 132 to 141 are periplasmic; the sequence is KYDVSLPTKK. The helical transmembrane segment at 142–162 threads the bilayer; it reads VTGILLLIVISGSLFSACQFA. At 163–264 the chain is on the cytoplasmic side; sequence YKDAKNKKAF…RKQIKLFNQA (102 aa). The helical transmembrane segment at 265–285 threads the bilayer; sequence ISGAPYTALSVPLSLTADSVL. Residues 286-541 are Periplasmic-facing; sequence SHDIHNYPDN…QGNPTPEGQG (256 aa).

The protein belongs to the phosphoethanolamine transferase family.

It is found in the cell inner membrane. Its function is as follows. Probably does not transfer phosphoethanolamine to lipid A. This chain is Putative transferase YhbX (yhbX), found in Escherichia coli (strain K12).